We begin with the raw amino-acid sequence, 436 residues long: Protein disulfide-isomerase (436 aa).

The region spanning F216–A365 is the Thioredoxin domain. Catalysis depends on nucleophile residues C266 and C269. C266 and C269 are disulfide-bonded. The segment at T328–L436 is disordered. Positions R334–E343 are enriched in basic residues. Composition is skewed to low complexity over residues S362–A377 and V385–L436. Residues K433–L436 carry the Prevents secretion from ER motif.

It belongs to the protein disulfide isomerase family.

It is found in the endoplasmic reticulum lumen. The enzyme catalyses Catalyzes the rearrangement of -S-S- bonds in proteins.. Participates in the folding of proteins containing disulfide bonds, may be involved in glycosylation, prolyl hydroxylation and triglyceride transfer. The sequence is that of Protein disulfide-isomerase from Alternaria alternata (Alternaria rot fungus).